Reading from the N-terminus, the 141-residue chain is Galactose-6-phosphate isomerase subunit LacA (141 aa).

It belongs to the LacAB/RpiB family. As to quaternary structure, heteromultimeric protein consisting of LacA and LacB.

The catalysed reaction is aldehydo-D-galactose 6-phosphate = keto-D-tagatose 6-phosphate. Its pathway is carbohydrate metabolism; D-galactose 6-phosphate degradation; D-tagatose 6-phosphate from D-galactose 6-phosphate: step 1/1. The polypeptide is Galactose-6-phosphate isomerase subunit LacA (Streptococcus equi subsp. zooepidemicus (strain MGCS10565)).